The primary structure comprises 423 residues: MKAELIAVGTEILTGQIVNTNAQFLSEKMAELGIDVYFQTAVGDNEERLLSVITTASQRSDLVILCGGLGPTKDDLTKQTLAKYLRRDLVYDEQACQKLDDFFAKRKPSSRTPNNERQAQVIEGSIPLPNKTGLAVGGFITVDGISYVVLPGPPSELKPIVNEELVPLLSKQYSTLYSKVLRFFGIGESQLVTVLSDFIENQTDPTIAPYAKTGEVTLRLSTKTENQALADKKLGQLEAQLLSRKTLEGQPLADVFYGYGEDNSLARETFELLVKYDKSITAAESLTAGLFQSTLASFPGASQVFNGGFVTYSMEEKAKMLGLPLEELKSHGVVSAYTAEGMAEQARLLTGADIGVSLTGVAGPDMLEEQPAGTVFIGLATQNKVESIKVLISGRSRLDVCYIATLHAFNMVRKTLLKLENLL.

It belongs to the CinA family.

The polypeptide is Putative competence-damage inducible protein (Streptococcus pyogenes serotype M4 (strain MGAS10750)).